Here is a 141-residue protein sequence, read N- to C-terminus: Mitochondrial import inner membrane translocase subunit tim16 (141 aa).

The J-like stretch occupies residues 59-117 (EACKILNVNKPADGTAANMEEVMERFKRLFDANDPEKGGSFYLQSKVVRARERLEAEIK). The segment at 119–141 (KMEEKQAEEEVKEGWNPKIYKDR) is disordered.

This sequence belongs to the TIM16/PAM16 family. Heterodimer with tim14/pam18. Component of the PAM complex, at least composed of hsp70-5/ssc1, grpe/mge1, tim44, un-4/pam16, pam17 and tim14/pam18.

It is found in the mitochondrion inner membrane. Essential component of the PAM complex, a complex required for the translocation of transit peptide-containing proteins from the inner membrane into the mitochondrial matrix in an ATP-dependent manner. In the complex, it is required to regulate activity of mtHSP70 (hsp70-5) via its interaction with tim14/pam18. May act by positioning tim14/pam18 in juxtaposition to mtHSP70 at the translocon to maximize ATPase stimulation. This is Mitochondrial import inner membrane translocase subunit tim16 (un-4) from Neurospora crassa (strain ATCC 24698 / 74-OR23-1A / CBS 708.71 / DSM 1257 / FGSC 987).